A 354-amino-acid polypeptide reads, in one-letter code: Hydrophobic dipeptide epimerase (354 aa).

Substrate-binding positions include Thr134, Lys159, and 159–161; that span reads KIK. Residue Asp189 participates in Mg(2+) binding. Asn191 provides a ligand contact to substrate. Mg(2+) contacts are provided by Glu215 and Asp240. Substrate-binding positions include Lys264, 292 to 295, and 318 to 320; these read CMAE and DLD.

The protein belongs to the mandelate racemase/muconate lactonizing enzyme family. Mg(2+) serves as cofactor.

Its function is as follows. Catalyzes the epimerization of L-Ile-L-Tyr to L-Ile-D-Tyr (in vitro). Catalyzes the epimerization of dipeptides, with a preference for substrates with a hydrophobic or basic amino acid in the first position, followed by an aromatic residue in the second position. Has epimerase activity with L-Ile-L-Tyr, L-Val-L-Tyr and L-Arg-L-Tyr (in vitro). The polypeptide is Hydrophobic dipeptide epimerase (Enterococcus faecalis (strain ATCC 700802 / V583)).